We begin with the raw amino-acid sequence, 503 residues long: Probable DNA double-strand break repair helicase HerA (503 aa).

ATP-binding positions include arginine 122, 131–136 (GGGKSN), and 478–479 (KI).

The protein belongs to the HerA family.

The catalysed reaction is Couples ATP hydrolysis with the unwinding of duplex DNA at the replication fork by translocating in the 5'-3' direction. This creates two antiparallel DNA single strands (ssDNA). The leading ssDNA polymer is the template for DNA polymerase III holoenzyme which synthesizes a continuous strand.. It catalyses the reaction ATP + H2O = ADP + phosphate + H(+). The enzyme catalyses Couples ATP hydrolysis with the unwinding of duplex DNA by translocating in the 3'-5' direction.. In terms of biological role, involved in DNA double-strand break (DSB) repair. Probably acts with NurA to stimulate resection of the 5' strand and produce the long 3' single-strand that is required for RadA loading. Has DNA-dependent ATPase activity and DNA helicase activity. In Methanocaldococcus jannaschii (strain ATCC 43067 / DSM 2661 / JAL-1 / JCM 10045 / NBRC 100440) (Methanococcus jannaschii), this protein is Probable DNA double-strand break repair helicase HerA.